A 350-amino-acid chain; its full sequence is Holliday junction branch migration complex subunit RuvB (350 aa).

The interval 4–184 (TDRLIAAQPQ…FGIVQRLEFY (181 aa)) is large ATPase domain (RuvB-L). ATP contacts are provided by residues Ile23, Arg24, Gly65, Lys68, Thr69, Thr70, 131-133 (EDY), Arg174, Tyr184, and Arg221. Thr69 is a binding site for Mg(2+). Positions 185 to 255 (AVEELTEIVV…IADQALNMLH (71 aa)) are small ATPAse domain (RuvB-S). Residues 258 to 350 (RHGLDHMDRR…PLTPPGESDA (93 aa)) are head domain (RuvB-H). Arg294, Arg313, and Arg318 together coordinate DNA.

This sequence belongs to the RuvB family. As to quaternary structure, homohexamer. Forms an RuvA(8)-RuvB(12)-Holliday junction (HJ) complex. HJ DNA is sandwiched between 2 RuvA tetramers; dsDNA enters through RuvA and exits via RuvB. An RuvB hexamer assembles on each DNA strand where it exits the tetramer. Each RuvB hexamer is contacted by two RuvA subunits (via domain III) on 2 adjacent RuvB subunits; this complex drives branch migration. In the full resolvosome a probable DNA-RuvA(4)-RuvB(12)-RuvC(2) complex forms which resolves the HJ.

It is found in the cytoplasm. The enzyme catalyses ATP + H2O = ADP + phosphate + H(+). In terms of biological role, the RuvA-RuvB-RuvC complex processes Holliday junction (HJ) DNA during genetic recombination and DNA repair, while the RuvA-RuvB complex plays an important role in the rescue of blocked DNA replication forks via replication fork reversal (RFR). RuvA specifically binds to HJ cruciform DNA, conferring on it an open structure. The RuvB hexamer acts as an ATP-dependent pump, pulling dsDNA into and through the RuvAB complex. RuvB forms 2 homohexamers on either side of HJ DNA bound by 1 or 2 RuvA tetramers; 4 subunits per hexamer contact DNA at a time. Coordinated motions by a converter formed by DNA-disengaged RuvB subunits stimulates ATP hydrolysis and nucleotide exchange. Immobilization of the converter enables RuvB to convert the ATP-contained energy into a lever motion, pulling 2 nucleotides of DNA out of the RuvA tetramer per ATP hydrolyzed, thus driving DNA branch migration. The RuvB motors rotate together with the DNA substrate, which together with the progressing nucleotide cycle form the mechanistic basis for DNA recombination by continuous HJ branch migration. Branch migration allows RuvC to scan DNA until it finds its consensus sequence, where it cleaves and resolves cruciform DNA. This Chromohalobacter salexigens (strain ATCC BAA-138 / DSM 3043 / CIP 106854 / NCIMB 13768 / 1H11) protein is Holliday junction branch migration complex subunit RuvB.